The sequence spans 430 residues: Maintenance of mitochondrial morphology protein 1 (430 aa).

The Lumenal portion of the chain corresponds to 1 to 82; the sequence is MTEIDPNINE…ISNTWNFTQG (82 aa). A helical transmembrane segment spans residues 83–103; the sequence is LVVGQLSVIFLIIIFVKFFVF. Over 104–430 the chain is Cytoplasmic; the sequence is ADSSSSIPSK…AKPKDSDDTL (327 aa). Basic and acidic residues-rich tracts occupy residues 126 to 138 and 335 to 346; these read RDNK…DRHN and ENGKGSSSEDKK. 2 disordered regions span residues 126–154 and 315–346; these read RDNK…TDDE and QADQ…EDKK. The region spanning 178-408 is the SMP-LTD domain; sequence ASESLDWFNV…EPRFQVVKLP (231 aa).

Belongs to the MMM1 family. In terms of assembly, homodimer. Component of the ER-mitochondria encounter structure (ERMES) or MDM complex, composed of MMM1, MDM10, MDM12 and MDM34. An MMM1 homodimer associates with one molecule of MDM12 on each side in a pairwise head-to-tail manner, and the SMP-LTD domains of MMM1 and MDM12 generate a continuous hydrophobic tunnel for phospholipid trafficking.

Its subcellular location is the endoplasmic reticulum membrane. Its function is as follows. Component of the ERMES/MDM complex, which serves as a molecular tether to connect the endoplasmic reticulum (ER) and mitochondria. Components of this complex are involved in the control of mitochondrial shape and protein biogenesis, and function in nonvesicular lipid trafficking between the ER and mitochondria. The MDM12-MMM1 subcomplex functions in the major beta-barrel assembly pathway that is responsible for biogenesis of all outer membrane beta-barrel proteins, and acts in a late step after the SAM complex. The MDM10-MDM12-MMM1 subcomplex further acts in the TOM40-specific pathway after the action of the MDM12-MMM1 complex. Essential for establishing and maintaining the structure of mitochondria and maintenance of mtDNA nucleoids. The sequence is that of Maintenance of mitochondrial morphology protein 1 from Lodderomyces elongisporus (strain ATCC 11503 / CBS 2605 / JCM 1781 / NBRC 1676 / NRRL YB-4239) (Yeast).